The chain runs to 213 residues: Validoxylamine A 7'-phosphate phosphatase (213 aa).

The active-site Nucleophile is Asp8. Residues Asp8 and Asp10 each coordinate a divalent metal cation. Substrate-binding positions include 8–10 (DLD), 107–108 (TS), and Lys140. The active-site Proton donor is the Asp10. Residue Asp165 coordinates a divalent metal cation.

The protein belongs to the HAD-like hydrolase superfamily. CbbY/CbbZ/Gph/YieH family. Requires Mg(2+) as cofactor. Mn(2+) is required as a cofactor. It depends on Co(2+) as a cofactor.

The enzyme catalyses validoxylamine A 7'-phosphate + H2O = validoxylamine A + phosphate. Involved in the biosynthesis of the antifungal agent validamycin A. Catalyzes the dephosphorylation of validoxylamine A 7'-phosphate to yield validoxylamine A. VldH is also able to convert trehalose 6-phosphate to trehalose. The sequence is that of Validoxylamine A 7'-phosphate phosphatase from Streptomyces hygroscopicus subsp. limoneus.